Reading from the N-terminus, the 402-residue chain is Proline-rich protein 25 (402 aa).

Disordered stretches follow at residues 1 to 29 (MART…AAAH), 109 to 255 (TVPG…MVGS), and 337 to 371 (EAAQ…CPGR). Positions 345–355 (RRTAPPRRTAS) are enriched in low complexity. The span at 356 to 367 (PEPPAPGAPLPA) shows a compositional bias: pro residues.

The chain is Proline-rich protein 25 (PRR25) from Homo sapiens (Human).